A 29-amino-acid chain; its full sequence is Chassatide C1 (29 aa).

Positions 1–29 form a cross-link, cyclopeptide (Gly-Asn); it reads GDACGETCFTGICFTAGCSCNPWPTCTRN. 3 disulfides stabilise this stretch: C4/C18, C8/C20, and C13/C26.

In terms of processing, this is a cyclic peptide. As to expression, expressed in leaf, fruit, pedical and stem but not in root (at protein level).

Probably participates in a plant defense mechanism. The polypeptide is Chassatide C1 (Chassalia chartacea (Chassalia curviflora)).